Consider the following 411-residue polypeptide: Tyrosine--tRNA ligase (411 aa).

Tyrosine 34 serves as a coordination point for L-tyrosine. The short motif at 39 to 48 (CTATSLHIGS) is the 'HIGH' region element. Positions 171 and 175 each coordinate L-tyrosine. A 'KMSKS' region motif is present at residues 231-235 (KMGKT). ATP is bound at residue lysine 234. Positions 345–411 (ISAYELFYEA…GKKRHILVRV (67 aa)) constitute an S4 RNA-binding domain.

Belongs to the class-I aminoacyl-tRNA synthetase family. TyrS type 1 subfamily. In terms of assembly, homodimer.

The protein resides in the cytoplasm. The enzyme catalyses tRNA(Tyr) + L-tyrosine + ATP = L-tyrosyl-tRNA(Tyr) + AMP + diphosphate + H(+). Catalyzes the attachment of tyrosine to tRNA(Tyr) in a two-step reaction: tyrosine is first activated by ATP to form Tyr-AMP and then transferred to the acceptor end of tRNA(Tyr). The sequence is that of Tyrosine--tRNA ligase from Rickettsia rickettsii (strain Sheila Smith).